The sequence spans 221 residues: Immediate early response gene 2 protein (221 aa).

Methionine 1 is subject to N-acetylmethionine. Positions 54–156 are disordered; sequence THQPEFPPSR…EGEATSEVSN (103 aa). Basic and acidic residues predominate over residues 64–77; the sequence is RALDPRLHPPREPE. Over residues 125–136 the composition is skewed to low complexity; it reads SDLSDGSDAGLV.

Belongs to the IER family.

The protein resides in the cytoplasm. Its subcellular location is the nucleus. In terms of biological role, DNA-binding protein that seems to act as a transcription factor. Involved in the regulation of neuronal differentiation, acts upon JNK-signaling pathway activation and plays a role in neurite outgrowth in hippocampal cells. May mediate with FIBP FGF-signaling in the establishment of laterality in the embryo. Promotes cell motility, seems to stimulate tumor metastasis. The chain is Immediate early response gene 2 protein (Ier2) from Rattus norvegicus (Rat).